A 173-amino-acid polypeptide reads, in one-letter code: Mesencephalic astrocyte-derived neurotrophic factor homolog (173 aa).

Positions Met-1–Ala-22 are cleaved as a signal peptide. 4 disulfide bridges follow: Cys-28-Cys-114, Cys-31-Cys-103, Cys-61-Cys-72, and Cys-148-Cys-151.

This sequence belongs to the ARMET family.

It localises to the secreted. In terms of biological role, required during the maturation of the embryonic nervous system for maintenance of neuronal and cuticular connectivity. Essential for maintenance of dopaminergic neurons and dopamine levels. In Drosophila yakuba (Fruit fly), this protein is Mesencephalic astrocyte-derived neurotrophic factor homolog.